A 144-amino-acid chain; its full sequence is Granulocyte-macrophage colony-stimulating factor (144 aa).

An N-terminal signal peptide occupies residues 1–17; sequence MWLQNLLLLGTVVCSIS. Ser24 carries an O-linked (GalNAc...) serine glycan. O-linked (GalNAc...) threonine glycosylation occurs at Thr27. Residues Asn44, Asn47, and Asn54 are each glycosylated (N-linked (GlcNAc...) asparagine). Cystine bridges form between Cys71–Cys113 and Cys105–Cys138.

It belongs to the GM-CSF family. As to quaternary structure, monomer. The signaling GM-CSF receptor complex is a dodecamer of two head-to-head hexamers of two alpha, two beta, and two ligand subunits.

The protein localises to the secreted. Its function is as follows. Cytokine that stimulates the growth and differentiation of hematopoietic precursor cells from various lineages, including granulocytes, macrophages, eosinophils and erythrocytes. The sequence is that of Granulocyte-macrophage colony-stimulating factor (CSF2) from Sus scrofa (Pig).